The following is a 339-amino-acid chain: Polyhydroxybutyrate depolymerase (339 aa).

Positions 1–20 are cleaved as a signal peptide; it reads MFDSVKIAWLVALGAAQVAA. Serine 39 is an active-site residue. Cysteine 70 and cysteine 79 are oxidised to a cystine. Aspartate 121 is a catalytic residue. N-linked (GlcNAc...) asparagine glycosylation is present at asparagine 144. Histidine 155 is an active-site residue. Cystine bridges form between cysteine 169–cysteine 180, cysteine 234–cysteine 241, and cysteine 250–cysteine 304. Tryptophan 307 contributes to the (3R)-hydroxybutanoate trimer binding site.

This sequence belongs to the carbohydrate esterase 1 (CE1) family.

It localises to the secreted. The catalysed reaction is [(3R)-hydroxybutanoate](n) + H2O = [(3R)-hydroxybutanoate](n-1) + (R)-3-hydroxybutanoate + H(+). With respect to regulation, the enzyme is completely inhibited by dithiothreitol (DTT) and diisopropylfluorophosphate (DFP), and partially inhibited by HgCl(2) and by enzyme3-(p-nitrophenoxy)propane (EPNP). Activity is not affected by N-ethylmaleimide (NEM) or phenylmethylsulfonyl fluoride (PMSF). In terms of biological role, esterase involved in the hydrolysis of polyhydroxybutyrate, a microbial polyester that can be produced from renewable resources. The protein is Polyhydroxybutyrate depolymerase of Talaromyces funiculosus (Fruitlet core rot fungus).